Here is a 146-residue protein sequence, read N- to C-terminus: Transcriptional regulator MraZ (146 aa).

2 consecutive SpoVT-AbrB domains span residues 5–50 (SSFH…TFNE) and 77–120 (ACEC…SREQ).

This sequence belongs to the MraZ family. As to quaternary structure, forms oligomers.

Its subcellular location is the cytoplasm. It is found in the nucleoid. The protein is Transcriptional regulator MraZ of Desulforapulum autotrophicum (strain ATCC 43914 / DSM 3382 / VKM B-1955 / HRM2) (Desulfobacterium autotrophicum).